Consider the following 162-residue polypeptide: Caveolin-2 (162 aa).

The Cytoplasmic segment spans residues 1 to 86 (MGLETEKADV…FEISKYVMYK (86 aa)). Tyrosine 19 carries the post-translational modification Phosphotyrosine; by SRC. Phosphoserine occurs at positions 20 and 23. Tyrosine 27 carries the post-translational modification Phosphotyrosine; by SRC. Serine 36 carries the phosphoserine modification. The segment at residues 87-107 (FLTVFLAIPLAFIAGILFATL) is an intramembrane region (helical). The Cytoplasmic portion of the chain corresponds to 108 to 162 (SCLHIWILMPFVKTCLMVLPSVQTIWKSVTDVFIAPLCTSIGRSFSSVSLQLSQD).

Belongs to the caveolin family. Monomer or homodimer. Interacts with CAV1; the interaction forms a stable heterooligomeric complex that is required for targeting to lipid rafts and for caveolae formation. Tyrosine phosphorylated forms do not form heterooligomers with the Tyr-19-phosphorylated form existing as a monomer or dimer, and the Tyr-27-form as a monomer only. Interacts (tyrosine phosphorylated form) with the SH2 domain-containing proteins, RASA1, NCK1 and SRC. Interacts (tyrosine phosphorylated form) with INSR, the interaction (Tyr-27-phosphorylated form) is increased on insulin stimulation. Interacts (Tyr-19 phosphorylated form) with MAPK1 (phosphorylated form); the interaction, promoted by insulin, leads to nuclear location and MAPK1 activation. Interacts with STAT3; the interaction is increased on insulin-induced tyrosine phosphorylation leading to STAT activation. In terms of processing, phosphorylated on serine and tyrosine residues. CAV1 promotes phosphorylation on Ser-23 which then targets the complex to the plasma membrane, lipid rafts and caveolae. Phosphorylation on Ser-36 appears to modulate mitosis in endothelial cells. Phosphorylation on both Tyr-19 and Tyr-27 is required for insulin-induced 'Ser-727' phosphorylation of STAT3 and its activation. Phosphorylation on Tyr-19 is required for insulin-induced phosphorylation of MAPK1 and DNA binding of STAT3. Tyrosine phosphorylation is induced by both EGF and insulin (By. similarity).

The protein resides in the nucleus. The protein localises to the cytoplasm. It localises to the golgi apparatus membrane. It is found in the cell membrane. Its subcellular location is the membrane. The protein resides in the caveola. May act as a scaffolding protein within caveolar membranes. Interacts directly with G-protein alpha subunits and can functionally regulate their activity. Acts as an accessory protein in conjunction with CAV1 in targeting to lipid rafts and driving caveolae formation. The Ser-36 phosphorylated form has a role in modulating mitosis in endothelial cells. Positive regulator of cellular mitogenesis of the MAPK signaling pathway. Required for the insulin-stimulated nuclear translocation and activation of MAPK1 and STAT3, and the subsequent regulation of cell cycle progression. This chain is Caveolin-2 (CAV2), found in Papio anubis (Olive baboon).